Reading from the N-terminus, the 113-residue chain is Colicin-E1* immunity protein (113 aa).

Its function is as follows. This protein is able to protect a cell, which harbors the plasmid pKY-1 encoding colicin E1*, against colicin E1*. This chain is Colicin-E1* immunity protein (imm), found in Shigella sonnei.